We begin with the raw amino-acid sequence, 106 residues long: PTS system fructose-like EIIB component 2 (106 aa).

A PTS EIIB type-2 domain is found at 1 to 103 (MTKIIAVTAC…IMSKIEAHLA (103 aa)). Cys10 (phosphocysteine intermediate) is an active-site residue. A Phosphocysteine; by EIIA modification is found at Cys10.

The protein resides in the cytoplasm. The catalysed reaction is D-fructose(out) + N(pros)-phospho-L-histidyl-[protein] = D-fructose 1-phosphate(in) + L-histidyl-[protein]. In terms of biological role, the phosphoenolpyruvate-dependent sugar phosphotransferase system (sugar PTS), a major carbohydrate active transport system, catalyzes the phosphorylation of incoming sugar substrates concomitantly with their translocation across the cell membrane. The enzyme II FrwABC PTS system is involved in fructose transport. In Escherichia coli O157:H7, this protein is PTS system fructose-like EIIB component 2 (frwB).